The following is a 330-amino-acid chain: Beta-ketoacyl-[acyl-carrier-protein] synthase III (330 aa).

Active-site residues include Cys-114 and His-255. Residues 256-260 form an ACP-binding region; sequence QANQR. The active site involves Asn-285.

The protein belongs to the thiolase-like superfamily. FabH family. As to quaternary structure, homodimer.

The protein localises to the cytoplasm. The catalysed reaction is malonyl-[ACP] + acetyl-CoA + H(+) = 3-oxobutanoyl-[ACP] + CO2 + CoA. The protein operates within lipid metabolism; fatty acid biosynthesis. Its function is as follows. Catalyzes the condensation reaction of fatty acid synthesis by the addition to an acyl acceptor of two carbons from malonyl-ACP. Catalyzes the first condensation reaction which initiates fatty acid synthesis and may therefore play a role in governing the total rate of fatty acid production. Possesses both acetoacetyl-ACP synthase and acetyl transacylase activities. Its substrate specificity determines the biosynthesis of branched-chain and/or straight-chain of fatty acids. In Trichormus variabilis (strain ATCC 29413 / PCC 7937) (Anabaena variabilis), this protein is Beta-ketoacyl-[acyl-carrier-protein] synthase III.